A 199-amino-acid polypeptide reads, in one-letter code: 7-methyl-GTP pyrophosphatase (199 aa).

Aspartate 76 acts as the Proton acceptor in catalysis.

This sequence belongs to the Maf family. YceF subfamily. A divalent metal cation is required as a cofactor.

Its subcellular location is the cytoplasm. It carries out the reaction N(7)-methyl-GTP + H2O = N(7)-methyl-GMP + diphosphate + H(+). Functionally, nucleoside triphosphate pyrophosphatase that hydrolyzes 7-methyl-GTP (m(7)GTP). May have a dual role in cell division arrest and in preventing the incorporation of modified nucleotides into cellular nucleic acids. The sequence is that of 7-methyl-GTP pyrophosphatase from Rhizobium johnstonii (strain DSM 114642 / LMG 32736 / 3841) (Rhizobium leguminosarum bv. viciae).